Reading from the N-terminus, the 697-residue chain is Sodium-dependent phosphate transport protein 2B (697 aa).

The tract at residues M1–V45 is disordered. Over M1–T91 the chain is Cytoplasmic. Residues L92 to V112 traverse the membrane as a helical segment. The Extracellular portion of the chain corresponds to C113–N136. The chain crosses the membrane as a helical span at residues N137–V157. Residues Q158–A213 lie on the Cytoplasmic side of the membrane. A helical transmembrane segment spans residues F214 to L234. At E235–A363 the chain is on the extracellular side. Residues N295, N308, N321, and N356 are each glycosylated (N-linked (GlcNAc...) asparagine). A disulfide bond links C303 and C350. Residues V364–V384 form a helical membrane-spanning segment. At K385–P408 the chain is on the cytoplasmic side. The chain crosses the membrane as a helical span at residues F409 to I429. The Extracellular portion of the chain corresponds to V430–Q486. The chain crosses the membrane as a helical span at residues I487–F507. Over T508–R526 the chain is Cytoplasmic. Residues W527–L547 form a helical membrane-spanning segment. The Extracellular portion of the chain corresponds to S548–G551. The chain crosses the membrane as a helical span at residues W552 to L572. The Cytoplasmic portion of the chain corresponds to R573–V696.

This sequence belongs to the SLC34A transporter family. Highly abundant in the ileum of small intestine, whereas it is almost absent in the duodenum and in the jejunum.

It is found in the apical cell membrane. It catalyses the reaction 3 Na(+)(out) + phosphate(out) = 3 Na(+)(in) + phosphate(in). Involved in actively transporting phosphate into cells via Na(+) cotransport. The chain is Sodium-dependent phosphate transport protein 2B (Slc34a2) from Mus musculus (Mouse).